The sequence spans 320 residues: MENRNTFSWVKEQITRSISVSIMIYVITRTSISNAYPIFAQQGYENPREATGRIVCANCHLASKPVDIEVPQAVLPDTVFEAVLRIPYDMQLKQVLANGKKGGLNVGAVLILPEGFELAPPDRISPELKEKIGNLAFQSYRPDKKNILVIGPVPGKKYSEIVFPILSPDPATKKDAHFLKYPIYVGGNRGRGQIYPDGSKSNNTVYNATSTGIVRKILRKEKGGYEISIVDASDGRQVIDIIPPGPELLVSEGESIKLDQPLTSNPNVGGFGQGDAEIVLQDPLRVQGLLFFFASVILAQVFLVLKKKQFEKVQLYEMNF.

Positions 1–35 (MENRNTFSWVKEQITRSISVSIMIYVITRTSISNA) are cleaved as a signal peptide. The heme site is built by Tyr-36, Cys-56, Cys-59, and His-60. A helical transmembrane segment spans residues 286–305 (VQGLLFFFASVILAQVFLVL).

The protein belongs to the cytochrome f family. In terms of assembly, the 4 large subunits of the cytochrome b6-f complex are cytochrome b6, subunit IV (17 kDa polypeptide, petD), cytochrome f and the Rieske protein, while the 4 small subunits are PetG, PetL, PetM and PetN. The complex functions as a dimer. Requires heme as cofactor.

The protein resides in the plastid. It is found in the chloroplast thylakoid membrane. Its function is as follows. Component of the cytochrome b6-f complex, which mediates electron transfer between photosystem II (PSII) and photosystem I (PSI), cyclic electron flow around PSI, and state transitions. This Triticum aestivum (Wheat) protein is Cytochrome f (petA).